We begin with the raw amino-acid sequence, 483 residues long: Matrix metalloproteinase-20 (483 aa).

The signal sequence occupies residues 1 to 22 (MKVLPASGLAVLLVTALKFSAA). Positions 23–107 (APSLFAATPR…PRCGVPDVAN (85 aa)) are cleaved as a propeptide — activation peptide. Positions 98–105 (PRCGVPDV) match the Cysteine switch motif. Zn(2+) is bound at residue Cys-100. Residues Glu-164, Ala-165, and Asp-166 each contribute to the Ca(2+) site. Residues His-176 and Asp-178 each contribute to the Zn(2+) site. Asp-183, Gly-184, Arg-186, and Thr-188 together coordinate Ca(2+). His-191 lines the Zn(2+) pocket. Glu-197, Gly-198, Gly-200, and Asp-202 together coordinate Ca(2+). His-204 contributes to the Zn(2+) binding site. Residues Asp-206 and Glu-209 each coordinate Ca(2+). His-226 contacts Zn(2+). Glu-227 is a catalytic residue. Positions 230 and 236 each coordinate Zn(2+). Hemopexin repeat units follow at residues 293–343 (PDIC…FPQL), 344–389 (MSNV…GFPR), 391–439 (VQRI…FSGV), and 440–483 (NGQI…WIGC). A disulfide bridge connects residues Cys-296 and Cys-483.

Belongs to the peptidase M10A family. Zn(2+) is required as a cofactor. The cofactor is Ca(2+). Autoactivates at least at the 107-Asn-|-Tyr-108 site. Expressed specifically in the enamel organ.

Its subcellular location is the secreted. It localises to the extracellular space. The protein resides in the extracellular matrix. Degrades amelogenin, the major protein component of the enamel matrix and two of the macromolecules characterizing the cartilage extracellular matrix: aggrecan and the cartilage oligomeric matrix protein (COMP). May play a central role in tooth enamel formation. The chain is Matrix metalloproteinase-20 (MMP20) from Sus scrofa (Pig).